Here is a 371-residue protein sequence, read N- to C-terminus: N-acetyllactosaminide alpha-2,3-sialyltransferase (371 aa).

Gly255 contributes to the CMP-N-acetyl-beta-neuraminate binding site. Asp258 serves as the catalytic Proton acceptor. CMP-N-acetyl-beta-neuraminate contacts are provided by residues 278-282 (APHPR), 299-300 (IE), and 322-323 (SG). The Proton donor role is filled by His280.

Belongs to the glycosyltransferase 52 family. Homodimer.

It localises to the cell outer membrane. It carries out the reaction a beta-D-galactosyl-(1-&gt;4)-N-acetyl-beta-D-glucosaminyl derivative + CMP-N-acetyl-beta-neuraminate = an N-acetyl-alpha-neuraminyl-(2-&gt;3)-beta-D-galactosyl-(1-&gt;4)-N-acetyl-beta-D-glucosaminyl derivative + CMP + H(+). It participates in bacterial outer membrane biogenesis; lipooligosaccharide biosynthesis. Functionally, catalyzes the transfer of sialic acid from the substrate CMP-N-acetylneuraminate to the terminal galactose residue of the lacto-N-neotetraose branch of surface lipooligosaccharide (LOS), forming an alpha-2,3-sialyl linkage. Thus, functions in the sialylation of LOS, which plays a role in the evasion of the host immune response by protecting N.meningitidis from complement-mediated serum killing and from phagocytic killing by neutrophils. This Neisseria meningitidis serogroup A / serotype 4A (strain DSM 15465 / Z2491) protein is N-acetyllactosaminide alpha-2,3-sialyltransferase.